The following is an 862-amino-acid chain: Bifunctional uridylyltransferase/uridylyl-removing enzyme (862 aa).

Positions 1–328 are uridylyltransferase; that stretch reads MSTAAIPTDA…FPRRAGAAIV (328 aa). The uridylyl-removing stretch occupies residues 329–685; sequence INERFQAVRE…ARVSDADQGV (357 aa). One can recognise an HD domain in the interval 447-563; sequence VDQHIMMVLR…GRFADTVGTE (117 aa). ACT domains are found at residues 686 to 765 and 794 to 862; these read QVMV…DRPS and ILSL…RLHI.

The protein belongs to the GlnD family. Mg(2+) serves as cofactor.

The catalysed reaction is [protein-PII]-L-tyrosine + UTP = [protein-PII]-uridylyl-L-tyrosine + diphosphate. The enzyme catalyses [protein-PII]-uridylyl-L-tyrosine + H2O = [protein-PII]-L-tyrosine + UMP + H(+). Its activity is regulated as follows. Uridylyltransferase (UTase) activity is inhibited by glutamine, while glutamine activates uridylyl-removing (UR) activity. Modifies, by uridylylation and deuridylylation, the PII regulatory proteins (GlnB and homologs), in response to the nitrogen status of the cell that GlnD senses through the glutamine level. Under low glutamine levels, catalyzes the conversion of the PII proteins and UTP to PII-UMP and PPi, while under higher glutamine levels, GlnD hydrolyzes PII-UMP to PII and UMP (deuridylylation). Thus, controls uridylylation state and activity of the PII proteins, and plays an important role in the regulation of nitrogen assimilation and metabolism. This is Bifunctional uridylyltransferase/uridylyl-removing enzyme from Aromatoleum aromaticum (strain DSM 19018 / LMG 30748 / EbN1) (Azoarcus sp. (strain EbN1)).